The sequence spans 527 residues: MSSSSNPVSQFNNISLGGRISGTRGILKFTTNNITWKSENGKIETVSSSDIKRANWARVTPRIFQLILSIKGGATVKFDGFKEQDYEVVRKYLSDQYNVSPLEIIELSSKGCNWGEVKVNGPMIQFTTDHGKVGFEFPISEVSQSVIGANNKNELTLEFHHDKAMDDDDETMVEMRFFTPIRPSKEGEEGGKEKKVGEDGEEDEEDEEDAEKEEEISALEQFQQTIMNKSDMVSNVGKSLVVFSAIQFLTPRGRIDIEMYPTFLKLHGKTHDYKVPYESISRLFQFFRPDQKHIFFIISLDPPIRQGQTKYAHLVIQFQAEENIHLELNLTDELQQKFKDQLSPIMNGNANALICKILKALTGKKITIPGNFQSDSGANSIKCSLKANEGYLYPLERCFFFVHKPPTYIKFEDISNIEFARYGAPSVRGGSNRTFDLSINLKNSTSIQFVNIQREEYPSLFNFLKEKKLSILNPVTTGPAMIIDDDDSDDDDYEPSESGSESDEGSASDESEEESEEDKKAKKKQKK.

Disordered stretches follow at residues 179-213 (TPIRPSKEGEEGGKEKKVGEDGEEDEEDEEDAEKE) and 479-527 (PAMI…KQKK). A compositionally biased stretch (basic and acidic residues) spans 183 to 198 (PSKEGEEGGKEKKVGE). Acidic residues-rich tracts occupy residues 199–213 (DGEEDEEDEEDAEKE) and 483–516 (IDDDDSDDDDYEPSESGSESDEGSASDESEEESE).

Belongs to the SSRP1 family. Forms a stable heterodimer with spt16. The spt16-ssrp1 dimer associates with a HMG box DNA-binding domain protein, probably nhp6, to form the FACT complex.

The protein localises to the nucleus. Its subcellular location is the chromosome. Its function is as follows. Component of the FACT complex, a general chromatin factor that acts to reorganize nucleosomes. The FACT complex is involved in multiple processes that require DNA as a template such as mRNA elongation, DNA replication and DNA repair. During transcription elongation the FACT complex acts as a histone chaperone that both destabilizes and restores nucleosomal structure. It facilitates the passage of RNA polymerase II and transcription by promoting the dissociation of one histone H2A-H2B dimer from the nucleosome, then subsequently promotes the reestablishment of the nucleosome following the passage of RNA polymerase II. The sequence is that of FACT complex subunit SSRP1 (ssrp1) from Dictyostelium discoideum (Social amoeba).